We begin with the raw amino-acid sequence, 205 residues long: Small ribosomal subunit protein mS26 (205 aa).

A mitochondrion-targeting transit peptide spans 1–27; it reads MLRALSRLGAGTPCRPRAPLVLPARGR.

Belongs to the mitochondrion-specific ribosomal protein mS26 family. Component of the mitochondrial small ribosomal subunit (mt-SSU). Mature mammalian 55S mitochondrial ribosomes consist of a small (28S) and a large (39S) subunit. The 28S small subunit contains a 12S ribosomal RNA (12S mt-rRNA) and 30 different proteins. The 39S large subunit contains a 16S rRNA (16S mt-rRNA), a copy of mitochondrial valine transfer RNA (mt-tRNA(Val)), which plays an integral structural role, and 52 different proteins.

It is found in the mitochondrion. The protein is Small ribosomal subunit protein mS26 (MRPS26) of Homo sapiens (Human).